Reading from the N-terminus, the 299-residue chain is Zinc-alpha-2-glycoprotein (299 aa).

Positions 1-17 (MVPVLLALLLLLGPAVS) are cleaved as a signal peptide. N-linked (GlcNAc...) asparagine glycosylation is found at Asn-24, Asn-125, and Asn-256. 2 cysteine pairs are disulfide-bonded: Cys-120/Cys-183 and Cys-222/Cys-277. Residues 204–289 (PSVSVTGHAA…EHRSLTRPLT (86 aa)) form the Ig-like C1-type domain.

Belongs to the MHC class I family. As to quaternary structure, interacts with PIP.

It is found in the secreted. Functionally, stimulates lipid degradation in adipocytes and causes the extensive fat losses associated with some advanced cancers. In Bos taurus (Bovine), this protein is Zinc-alpha-2-glycoprotein (AZGP1).